A 397-amino-acid polypeptide reads, in one-letter code: Elongation factor Tu (397 aa).

Positions 10–207 (KPHVNIGTIG…ACDSYIPEPQ (198 aa)) constitute a tr-type G domain. Positions 19-26 (GHIDHGKT) are G1. 19 to 26 (GHIDHGKT) provides a ligand contact to GTP. Threonine 26 lines the Mg(2+) pocket. The interval 60–64 (GITIA) is G2. The interval 81–84 (DCPG) is G3. GTP-binding positions include 81 to 85 (DCPGH) and 136 to 139 (NKCD). Residues 136-139 (NKCD) are G4. A G5 region spans residues 174-176 (SAL).

It belongs to the TRAFAC class translation factor GTPase superfamily. Classic translation factor GTPase family. EF-Tu/EF-1A subfamily. As to quaternary structure, monomer.

The protein resides in the cytoplasm. The enzyme catalyses GTP + H2O = GDP + phosphate + H(+). In terms of biological role, GTP hydrolase that promotes the GTP-dependent binding of aminoacyl-tRNA to the A-site of ribosomes during protein biosynthesis. This Nitratidesulfovibrio vulgaris (strain ATCC 29579 / DSM 644 / CCUG 34227 / NCIMB 8303 / VKM B-1760 / Hildenborough) (Desulfovibrio vulgaris) protein is Elongation factor Tu.